The primary structure comprises 446 residues: Maltoporin (446 aa).

The signal sequence occupies residues 1–25; the sequence is MMITLRKLPLAVAVAAGVMSAQAMA.

It belongs to the porin LamB (TC 1.B.3) family. Homotrimer formed of three 18-stranded antiparallel beta-barrels, containing three independent channels.

The protein resides in the cell outer membrane. It catalyses the reaction beta-maltose(in) = beta-maltose(out). Functionally, involved in the transport of maltose and maltodextrins. The chain is Maltoporin from Escherichia coli O7:K1 (strain IAI39 / ExPEC).